Reading from the N-terminus, the 379-residue chain is Cobalt-precorrin-5B C(1)-methyltransferase (379 aa).

Belongs to the CbiD family.

It catalyses the reaction Co-precorrin-5B + S-adenosyl-L-methionine = Co-precorrin-6A + S-adenosyl-L-homocysteine. The protein operates within cofactor biosynthesis; adenosylcobalamin biosynthesis; cob(II)yrinate a,c-diamide from sirohydrochlorin (anaerobic route): step 6/10. Catalyzes the methylation of C-1 in cobalt-precorrin-5B to form cobalt-precorrin-6A. The chain is Cobalt-precorrin-5B C(1)-methyltransferase from Klebsiella pneumoniae subsp. pneumoniae (strain ATCC 700721 / MGH 78578).